The primary structure comprises 429 residues: Isocitrate dehydrogenase [NADP] (429 aa).

Thr-108 serves as a coordination point for NADP(+). D-threo-isocitrate-binding residues include Ser-117, Asn-119, Arg-123, Arg-133, and Arg-156. Asp-308 contributes to the Mg(2+) binding site. NADP(+) is bound by residues His-340–Tyr-346, Asn-353, Tyr-393, and Arg-397.

It belongs to the isocitrate and isopropylmalate dehydrogenases family. Homodimer. Mg(2+) serves as cofactor. Mn(2+) is required as a cofactor.

It catalyses the reaction D-threo-isocitrate + NADP(+) = 2-oxoglutarate + CO2 + NADPH. Catalyzes the oxidative decarboxylation of isocitrate to 2-oxoglutarate and carbon dioxide with the concomitant reduction of NADP(+). In Caldococcus noboribetus, this protein is Isocitrate dehydrogenase [NADP] (icd).